The sequence spans 150 residues: PTS system galactitol-specific EIIA component (150 aa).

In terms of domain architecture, PTS EIIA type-2 spans 1–144; that stretch reads MTNLFVRSGI…TQLKEYFTKY (144 aa). Residue His62 is the Tele-phosphohistidine intermediate of the active site. His62 is subject to Phosphohistidine; by HPr.

In terms of assembly, forms a complex with one each of subunit of GatA, GatB and 2 subunits of GatC.

The protein resides in the cytoplasm. In terms of biological role, the phosphoenolpyruvate-dependent sugar phosphotransferase system (sugar PTS), a major carbohydrate active transport system, catalyzes the phosphorylation of incoming sugar substrates concomitantly with their translocation across the cell membrane. The enzyme II complex composed of GatA, GatB and GatC is involved in galactitol transport. The polypeptide is PTS system galactitol-specific EIIA component (gatA) (Escherichia coli O157:H7).